A 565-amino-acid chain; its full sequence is MSEKKLAVNEYLKTDSDYLRGTIQEGLDTAVTGAFSEGDQQLIKFHGFYQQDDRDLRNERKEQKLEPLYSFMLRARVAGGVCSPQQWLAVDDIASNLTSSNSIRLTTRQTFQYHGIPKRNLKTIIQDLDREALDSIAACGDVNRNVMCNPNPVESKLHQQAYAYAKQLSDNMLPHTKAYAEIWLDDEKLVTTEGEEVEPVYGKTYLPRKFKMAVAVPPDNDVDVYTNDLGFVAVAEEGELVGFNMVAGGGMGSTHGEVATFPRLADDFGYIKAEDTLKFAEAVMTVQRDWGNRENRKLSRLKYTIVKHGYDAFKAEVEKRTGIKFEPKRDVVIGDRGDRYGWKQGVDDNWHLTLFIEGGRVKDLPGQPLQTGLREIAKIHQGDFRMTSNQNIIIAGVPAADKDKIEALARQHGLMGKLITETRGHSIACVALPTCALAMAEAERYFPDFLTKVEALQDKHGFLDQGIVIRMTGCPNGCARPFAAEIGLVGKAPGRYNLYLGASFEGTRLNKLYRENIQEAEILAELDSLFARYVAERETGETFGNYTVRSGVVTAVIDAAKDFHG.

Cys429, Cys435, Cys474, and Cys478 together coordinate [4Fe-4S] cluster. Siroheme is bound at residue Cys478.

The protein belongs to the nitrite and sulfite reductase 4Fe-4S domain family. Alpha(8)-beta(8). The alpha component is a flavoprotein, the beta component is a hemoprotein. Requires siroheme as cofactor. It depends on [4Fe-4S] cluster as a cofactor.

It carries out the reaction hydrogen sulfide + 3 NADP(+) + 3 H2O = sulfite + 3 NADPH + 4 H(+). It functions in the pathway sulfur metabolism; hydrogen sulfide biosynthesis; hydrogen sulfide from sulfite (NADPH route): step 1/1. Component of the sulfite reductase complex that catalyzes the 6-electron reduction of sulfite to sulfide. This is one of several activities required for the biosynthesis of L-cysteine from sulfate. The polypeptide is Sulfite reductase [NADPH] hemoprotein beta-component (Shewanella piezotolerans (strain WP3 / JCM 13877)).